The primary structure comprises 246 residues: 14-3-3 protein eta (246 aa).

Glycine 2 is modified (N-acetylglycine). Phosphoserine occurs at positions 25 and 59.

The protein belongs to the 14-3-3 family. As to quaternary structure, homodimer. Interacts with many nuclear hormone receptors and cofactors including AR, ESR1, ESR2, MC2R, NR3C1, NRIP1, PPARBP and THRA. Interacts with ABL1 (phosphorylated form); the interaction retains it in the cytoplasm. Weakly interacts with CDKN1B. Interacts with ARHGEF28 and CDK16. Interacts with GAB2. Interacts with KCNK18 in a phosphorylation-dependent manner. Interacts with SAMSN1. Interacts with the 'Ser-241' phosphorylated form of PDPK1. Interacts with the 'Thr-369' phosphorylated form of DAPK2. Interacts with PI4KB, TBC1D22A and TBC1D22B. Interacts with SLITRK1. Interacts with MEFV. Phosphorylated on Ser-59 by protein kinase C delta type catalytic subunit in a sphingosine-dependent fashion.

Its subcellular location is the cytoplasm. Its function is as follows. Adapter protein implicated in the regulation of a large spectrum of both general and specialized signaling pathways. Binds to a large number of partners, usually by recognition of a phosphoserine or phosphothreonine motif. Binding generally results in the modulation of the activity of the binding partner. Negatively regulates the kinase activity of PDPK1. The sequence is that of 14-3-3 protein eta (YWHAH) from Bos taurus (Bovine).